The chain runs to 601 residues: Pyranose 2-oxidase (601 aa).

His151 carries the post-translational modification Tele-8alpha-FAD histidine. Residues Gln406 and His408 each coordinate substrate. The active-site Proton acceptor is His505. Asn558 is an active-site residue. The tract at residues 577-601 is disordered; sequence KLGKKGSHSGNRDDGDVDTDTDDDA. Residues 591-601 are compositionally biased toward acidic residues; it reads GDVDTDTDDDA.

The protein belongs to the GMC oxidoreductase family. As to quaternary structure, homotetramer. The cofactor is FAD.

The enzyme catalyses D-glucose + O2 = 2-dehydro-D-glucose + H2O2. Functionally, catalyzes the oxidation of various aldopyranoses and disaccharides on carbon-2 to the corresponding 2-keto sugars concomitant with the reduction of O(2) to H(2)O(2). In Emericella nidulans (strain FGSC A4 / ATCC 38163 / CBS 112.46 / NRRL 194 / M139) (Aspergillus nidulans), this protein is Pyranose 2-oxidase (p2ox).